The following is an 87-amino-acid chain: Small ribosomal subunit protein bS20 (87 aa).

The interval 1-26 (MANIKSAKKRAVQSEKRRKHNASRRS) is disordered.

It belongs to the bacterial ribosomal protein bS20 family.

Binds directly to 16S ribosomal RNA. This chain is Small ribosomal subunit protein bS20, found in Yersinia enterocolitica serotype O:8 / biotype 1B (strain NCTC 13174 / 8081).